Consider the following 233-residue polypeptide: Nickel import system ATP-binding protein NikE (233 aa).

In terms of domain architecture, ABC transporter spans 2 to 228; sequence IELKHVTFGY…DRHSYTKELV (227 aa). An ATP-binding site is contributed by 35–42; it reads GESGCGKS.

The protein belongs to the ABC transporter superfamily. As to quaternary structure, the complex is composed of two ATP-binding proteins (NikD and NikE), two transmembrane proteins (NikB and NikC) and a solute-binding protein (NikA).

It localises to the cell membrane. It catalyses the reaction Ni(2+)(out) + ATP + H2O = Ni(2+)(in) + ADP + phosphate + H(+). Its function is as follows. Part of the ABC transporter complex NikABCDE (Opp2) involved in nickel import. Probably responsible for energy coupling to the transport system. The chain is Nickel import system ATP-binding protein NikE from Staphylococcus aureus (strain bovine RF122 / ET3-1).